The sequence spans 137 residues: Nucleoside diphosphate kinase (137 aa).

Residues K9, F57, R85, T91, R102, and N112 each contribute to the ATP site. H115 (pros-phosphohistidine intermediate) is an active-site residue.

The protein belongs to the NDK family. In terms of assembly, homotetramer. Mg(2+) is required as a cofactor.

It localises to the cytoplasm. The enzyme catalyses a 2'-deoxyribonucleoside 5'-diphosphate + ATP = a 2'-deoxyribonucleoside 5'-triphosphate + ADP. It catalyses the reaction a ribonucleoside 5'-diphosphate + ATP = a ribonucleoside 5'-triphosphate + ADP. Functionally, major role in the synthesis of nucleoside triphosphates other than ATP. The ATP gamma phosphate is transferred to the NDP beta phosphate via a ping-pong mechanism, using a phosphorylated active-site intermediate. The chain is Nucleoside diphosphate kinase from Geotalea daltonii (strain DSM 22248 / JCM 15807 / FRC-32) (Geobacter daltonii).